Reading from the N-terminus, the 361-residue chain is F-box protein pof7 (361 aa).

Residues 105 to 157 (NESVVPNILKLPDEVLLVILENCIRDLHDLRYLSSIALTCKHFAKALRADSLY) enclose the F-box domain.

Interacts with skp1.

It localises to the cytoplasm. This is F-box protein pof7 (pof7) from Schizosaccharomyces pombe (strain 972 / ATCC 24843) (Fission yeast).